A 278-amino-acid polypeptide reads, in one-letter code: Large ribosomal subunit protein uL2 (278 aa).

Composition is skewed to basic residues over residues Arg-210 to Gln-219 and Lys-252 to Lys-263. Residues Arg-210–Lys-278 are disordered.

Belongs to the universal ribosomal protein uL2 family. In terms of assembly, part of the 50S ribosomal subunit. Forms a bridge to the 30S subunit in the 70S ribosome.

In terms of biological role, one of the primary rRNA binding proteins. Required for association of the 30S and 50S subunits to form the 70S ribosome, for tRNA binding and peptide bond formation. It has been suggested to have peptidyltransferase activity; this is somewhat controversial. Makes several contacts with the 16S rRNA in the 70S ribosome. The chain is Large ribosomal subunit protein uL2 from Lactobacillus gasseri (strain ATCC 33323 / DSM 20243 / BCRC 14619 / CIP 102991 / JCM 1131 / KCTC 3163 / NCIMB 11718 / NCTC 13722 / AM63).